Here is a 196-residue protein sequence, read N- to C-terminus: NADH-quinone oxidoreductase subunit C (196 aa).

It belongs to the complex I 30 kDa subunit family. As to quaternary structure, NDH-1 is composed of 14 different subunits. Subunits NuoB, C, D, E, F, and G constitute the peripheral sector of the complex.

It localises to the cell inner membrane. It carries out the reaction a quinone + NADH + 5 H(+)(in) = a quinol + NAD(+) + 4 H(+)(out). Functionally, NDH-1 shuttles electrons from NADH, via FMN and iron-sulfur (Fe-S) centers, to quinones in the respiratory chain. The immediate electron acceptor for the enzyme in this species is believed to be ubiquinone. Couples the redox reaction to proton translocation (for every two electrons transferred, four hydrogen ions are translocated across the cytoplasmic membrane), and thus conserves the redox energy in a proton gradient. This is NADH-quinone oxidoreductase subunit C from Rickettsia bellii (strain RML369-C).